A 92-amino-acid chain; its full sequence is Small ribosomal subunit protein uS19 (92 aa).

It belongs to the universal ribosomal protein uS19 family.

Its function is as follows. Protein S19 forms a complex with S13 that binds strongly to the 16S ribosomal RNA. This Cellvibrio japonicus (strain Ueda107) (Pseudomonas fluorescens subsp. cellulosa) protein is Small ribosomal subunit protein uS19.